The sequence spans 345 residues: cAMP-responsive element modulator (345 aa).

A KID domain is found at 88–147 (VQVAAIAETDESAESEGVIDSHKRREILSRRPSYRKILNELSSDVPGVPKIEEERSEEEG). Ser102, Ser129, Ser271, Ser274, and Ser277 each carry phosphoserine. Positions 286–345 (TRKRELRLMKNREAAKECRRRKKEYVKCLESRVAVLEVQNKKLIEELETLKDICSPKTDY) constitute a bZIP domain. Residues 287 to 312 (RKRELRLMKNREAAKECRRRKKEYVK) form a basic motif region. Positions 314 to 335 (LESRVAVLEVQNKKLIEELETL) are leucine-zipper.

It belongs to the bZIP family. Binds DNA as a dimer. Interacts with FHL5. Interacts with CDC34. May interact with TSSK4. Post-translationally, isoform 9 is ubiquitinated by CDC34 and RAD6B in order to be degraded by the proteasome. In terms of processing, stimulated by phosphorylation. Phosphorylated on Ser-116 by TSSK4 in vitro. Expressed in testes (round spermatids) (at protein level). Isoform 14 is the major activator form in testes.

The protein localises to the nucleus. The protein resides in the cytoplasm. Its function is as follows. Transcriptional regulator that binds the cAMP response element (CRE), a sequence present in many viral and cellular promoters. Isoforms are either transcriptional activators or repressors. Plays a role in spermatogenesis and is involved in spermatid maturation. May play a role in the regulation of the circadian clock: acts as a transcriptional repressor of the core circadian component PER1 by directly binding to cAMP response elements in its promoter. This chain is cAMP-responsive element modulator, found in Homo sapiens (Human).